The sequence spans 1949 residues: Protein GREB1 (1949 aa).

3 disordered regions span residues 52 to 77 (EGGS…GPPN), 302 to 334 (ILSN…GGGN), and 1085 to 1210 (EALE…GQRS). The span at 59–68 (NEEEEEEGEG) shows a compositional bias: acidic residues. 2 stretches are compositionally biased toward basic and acidic residues: residues 1085–1095 (EALESDAEKLS) and 1110–1126 (TSEK…RSHD). The segment covering 1127-1147 (SASSSLSSKASGSALGGESSA) has biased composition (low complexity). Positions 1166 to 1178 (PAEEGRAPGEKQR) are enriched in basic and acidic residues. The chain crosses the membrane as a helical span at residues 1868–1888 (DLLFSGLLLYLCDSFVGASFL).

It belongs to the GREB1 family. In terms of tissue distribution, expressed in proliferating prostatic tissue and prostate cancer.

The protein resides in the membrane. Functionally, may play a role in estrogen-stimulated cell proliferation. Acts as a regulator of hormone-dependent cancer growth in breast and prostate cancers. The polypeptide is Protein GREB1 (GREB1) (Homo sapiens (Human)).